Consider the following 432-residue polypeptide: Trigger factor (432 aa).

The PPIase FKBP-type domain maps to Gly-161–Pro-246.

The protein belongs to the FKBP-type PPIase family. Tig subfamily.

The protein resides in the cytoplasm. It catalyses the reaction [protein]-peptidylproline (omega=180) = [protein]-peptidylproline (omega=0). In terms of biological role, involved in protein export. Acts as a chaperone by maintaining the newly synthesized protein in an open conformation. Functions as a peptidyl-prolyl cis-trans isomerase. The polypeptide is Trigger factor (Aliivibrio fischeri (strain ATCC 700601 / ES114) (Vibrio fischeri)).